The following is a 374-amino-acid chain: Peptide chain release factor 2 (374 aa).

Residue Gln-252 is modified to N5-methylglutamine.

This sequence belongs to the prokaryotic/mitochondrial release factor family. Methylated by PrmC. Methylation increases the termination efficiency of RF2.

The protein resides in the cytoplasm. Its function is as follows. Peptide chain release factor 2 directs the termination of translation in response to the peptide chain termination codons UGA and UAA. This chain is Peptide chain release factor 2, found in Stenotrophomonas maltophilia (strain R551-3).